A 237-amino-acid chain; its full sequence is B3 domain-containing protein Os03g0184500 (237 aa).

Residues 137-228 (FVKPMLHSHV…TFKVHIIRAT (92 aa)) constitute a DNA-binding region (TF-B3).

The protein resides in the nucleus. This is B3 domain-containing protein Os03g0184500 from Oryza sativa subsp. japonica (Rice).